Reading from the N-terminus, the 364-residue chain is DNA replication and repair protein RecF (364 aa).

30–37 lines the ATP pocket; sequence GNNGMGKT.

This sequence belongs to the RecF family.

The protein resides in the cytoplasm. Its function is as follows. The RecF protein is involved in DNA metabolism; it is required for DNA replication and normal SOS inducibility. RecF binds preferentially to single-stranded, linear DNA. It also seems to bind ATP. The polypeptide is DNA replication and repair protein RecF (Porphyromonas gingivalis (strain ATCC 33277 / DSM 20709 / CIP 103683 / JCM 12257 / NCTC 11834 / 2561)).